Consider the following 195-residue polypeptide: MKIGIVTGIPGVGKTTVLSFADKILTEKGIPHKIANYGDYMLNTALKEGYVNSRDEIRKLQIEKQRELQALAARRIVEDLSLLGDEGIGLIDTHAVIRTPAGYLPGLPRHVIEVLSPKVIFLLEADPRIILERQKRDNSRARADYSDTTVINEVIQFARYSAMASAVLVGASVKVVINQEGDPSIAASDIINSLM.

Position 8–16 (8–16 (GIPGVGKTT)) interacts with ATP.

This sequence belongs to the archaeal adenylate kinase family.

The protein localises to the cytoplasm. It carries out the reaction AMP + ATP = 2 ADP. This is Adenylate kinase from Saccharolobus islandicus (strain M.14.25 / Kamchatka #1) (Sulfolobus islandicus).